A 114-amino-acid polypeptide reads, in one-letter code: NADH-ubiquinone oxidoreductase chain 3 (114 aa).

A run of 3 helical transmembrane segments spans residues 3–23 (ATIL…SFWL), 54–74 (FFLI…LLPF), and 85–105 (IVIL…IYEW).

The protein belongs to the complex I subunit 3 family.

Its subcellular location is the mitochondrion membrane. The catalysed reaction is a ubiquinone + NADH + 5 H(+)(in) = a ubiquinol + NAD(+) + 4 H(+)(out). Core subunit of the mitochondrial membrane respiratory chain NADH dehydrogenase (Complex I) that is believed to belong to the minimal assembly required for catalysis. Complex I functions in the transfer of electrons from NADH to the respiratory chain. The immediate electron acceptor for the enzyme is believed to be ubiquinone. The chain is NADH-ubiquinone oxidoreductase chain 3 (mt-nd3) from Xenopus laevis (African clawed frog).